Reading from the N-terminus, the 97-residue chain is Small ribosomal subunit protein bS6 (97 aa).

The protein belongs to the bacterial ribosomal protein bS6 family.

Binds together with bS18 to 16S ribosomal RNA. This Limosilactobacillus fermentum (strain NBRC 3956 / LMG 18251) (Lactobacillus fermentum) protein is Small ribosomal subunit protein bS6.